The sequence spans 317 residues: MALTELRIASRRSQLAMVQTNWVKAELEKAHPGLKITVEAMATQGDKILDVALAKIGDKGLFTKELEAQMLVDRADIAVHSLKDLPTNLPEGLMLGCITEREDPADALVVNAKNQAYKLETLPEGSVVGTSSLRRLAQLRHHYPHLIFKDVRGNVITRLEKLDSGDYDCLILAAAGLGRLGFSDRIHQLIPGEISLHAVGQGALGIECVEGKPEVLEAIKVLEHTPTSQRCLAERAFLRELEGGCQVPIGVNTRFEGDQLILTGMVASLDGKRLIRDQTSGEASEAEAIGIALANTLKGQGAGEILKEIFETVRPEA.

Residue Cys-245 is modified to S-(dipyrrolylmethanemethyl)cysteine.

The protein belongs to the HMBS family. Monomer. It depends on dipyrromethane as a cofactor.

It catalyses the reaction 4 porphobilinogen + H2O = hydroxymethylbilane + 4 NH4(+). It participates in porphyrin-containing compound metabolism; protoporphyrin-IX biosynthesis; coproporphyrinogen-III from 5-aminolevulinate: step 2/4. The protein operates within porphyrin-containing compound metabolism; chlorophyll biosynthesis. Tetrapolymerization of the monopyrrole PBG into the hydroxymethylbilane pre-uroporphyrinogen in several discrete steps. The sequence is that of Porphobilinogen deaminase from Synechococcus sp. (strain CC9605).